A 163-amino-acid polypeptide reads, in one-letter code: Phosphopantetheine adenylyltransferase (163 aa).

Residue T11 coordinates substrate. Residues 11–12 and H19 contribute to the ATP site; that span reads TF. Substrate is bound by residues K43, L75, and R89. ATP contacts are provided by residues 90 to 92, E100, and 125 to 131; these read GLR and YSFISST.

This sequence belongs to the bacterial CoaD family. As to quaternary structure, homohexamer. Requires Mg(2+) as cofactor.

The protein localises to the cytoplasm. The catalysed reaction is (R)-4'-phosphopantetheine + ATP + H(+) = 3'-dephospho-CoA + diphosphate. Its pathway is cofactor biosynthesis; coenzyme A biosynthesis; CoA from (R)-pantothenate: step 4/5. Its function is as follows. Reversibly transfers an adenylyl group from ATP to 4'-phosphopantetheine, yielding dephospho-CoA (dPCoA) and pyrophosphate. This Acinetobacter baumannii (strain ACICU) protein is Phosphopantetheine adenylyltransferase.